The sequence spans 465 residues: SHC-transforming protein 1 (465 aa).

The 184-residue stretch at 44-227 (MGPGVPYLVR…AGFDGSAWDE (184 aa)) folds into the PID domain. Residues 228–369 (EEEELPDHAY…SMEDQLKREP (142 aa)) are CH1. Residues 281 to 315 (VSGAEQDSRKMQPTLQGRERFPVPCSRPPNRPDLF) are disordered. Residues 370-461 (WYQGKMSRKE…GSELCLQQPV (92 aa)) form the SH2 domain.

In terms of assembly, interacts with grb2. As to expression, highly expressed in oocytes and embryo. Also expressed in liver. Detected in ovary, testis and heart and to a lesser extent in liver (at protein level).

It localises to the cytoplasm. In terms of biological role, implicated in ras-dependent oocyte maturation induced by insulin/IGF1. This is SHC-transforming protein 1 (shc1) from Xenopus laevis (African clawed frog).